A 490-amino-acid polypeptide reads, in one-letter code: Tektin-3 (490 aa).

Thr-7, Thr-9, and Thr-10 each carry an O-linked (GalNAc...) threonine glycan. 6 N-linked (GlcNAc...) asparagine glycosylation sites follow: Asn-41, Asn-86, Asn-103, Asn-111, Asn-276, and Asn-344. The stretch at 424–451 (VHEVDDTIQTLQQRLRDAEDTLQSLVHI) forms a coiled coil.

Belongs to the tektin family. As to quaternary structure, microtubule inner protein component of sperm flagellar doublet microtubules. Interacts with TEKT1, TEKT2, TEKT4 and TEKT5. Interacts with CCDC38. Post-translationally, N- and O-glycosylated. May be proteolytically processed during the epididymal transit of spermatozoa. In terms of processing, ubiquitinated, leading to its degradation. Deubiquitinated by USP16, promoting its stability. Expressed in spermatozoa. Expressed in airway epithelial cells.

Its subcellular location is the cytoplasm. It localises to the cytoskeleton. The protein localises to the cilium axoneme. The protein resides in the flagellum axoneme. It is found in the cytoplasmic vesicle. Its subcellular location is the secretory vesicle. It localises to the acrosome outer membrane. Microtubule inner protein (MIP) part of the dynein-decorated doublet microtubules (DMTs) in cilia and flagellar axoneme. Forms filamentous polymers in the walls of ciliary and flagellar microtubules. Required for normal sperm mobility. This chain is Tektin-3 (TEKT3), found in Homo sapiens (Human).